The primary structure comprises 291 residues: Short-chain dehydrogenase/reductase GME11359 (291 aa).

The NADP(+) site is built by Leu-18, Asp-67, Asn-96, Tyr-177, Lys-181, and Val-209. Residue Tyr-177 is the Proton acceptor of the active site. The active-site Lowers pKa of active site Tyr is Lys-181.

It belongs to the short-chain dehydrogenases/reductases (SDR) family.

It participates in secondary metabolite biosynthesis. Functionally, short-chain dehydrogenase/reductase; part of the gene cluster that mediates the biosynthesis of dibenzodioxocinones such as pestalotiollide B, a novel class of inhibitors against cholesterol ester transfer protein (CEPT). The biosynthesis initiates from condensation of acetate and malonate units catalyzed by the non-reducing PKS pks8/GME11356. Pks8/GME11356 lacks a thioesterase (TE) domain, which is important to the cyclizing of the third ring of atrochrysone carboxylic acid, and the esterase GME11355 might play the role of TE and catalyzes the cyclization reaction of the C ring. The lactamase-like protein GME11357 (or other beta-lactamases in Pestalotiopsis microspora) probably hydrolyzes the thioester bond between the ACP of pks8/GME11356 and the intermediate to release atrochrysone carboxylic acid, which is spontaneously dehydrates to form endocrocin anthrone. Endocrocin anthrone is further converted to emodin via the endocrocin intermediate. Emodin is then oxidized by several enzymes such as the Baeyer-Villiger oxidase GME11358, the oxidoreductase GME11367, the short chain dehydrogenase/reductase GME11373, as well as by other oxidoreductases from the cluster, to modify the A and C rings and open the B ring, and finally yield monodictyphenone. The prenyltransferase GME11375 may catalyze the addition reaction between the C5 side chains and the carbon bone of dibenzodioxocinones. The remaining biochemical reactions to the final product dibenzodioxocinones should be methylation catalyzed by methyltransferase GME11366 and reduction and lactonization reaction catalyzed by a series of oxidordeuctases. This chain is Short-chain dehydrogenase/reductase GME11359, found in Pestalotiopsis microspora.